Reading from the N-terminus, the 320-residue chain is Malate dehydrogenase (320 aa).

NAD(+) contacts are provided by residues 10–15 (GAGQIG) and D34. Positions 83 and 89 each coordinate substrate. Residues N96 and 119-121 (ITN) each bind NAD(+). 2 residues coordinate substrate: N121 and R152. H176 acts as the Proton acceptor in catalysis.

This sequence belongs to the LDH/MDH superfamily. MDH type 3 family.

It carries out the reaction (S)-malate + NAD(+) = oxaloacetate + NADH + H(+). Functionally, catalyzes the reversible oxidation of malate to oxaloacetate. In Methylobacterium nodulans (strain LMG 21967 / CNCM I-2342 / ORS 2060), this protein is Malate dehydrogenase.